Consider the following 65-residue polypeptide: Large ribosomal subunit protein bL32 (65 aa).

The segment at 1–45 is disordered; that stretch reads MAVQQNKKTPSKRGMRRAHDVLKKPTFSVDFSSGETHRRHHVTPD.

It belongs to the bacterial ribosomal protein bL32 family.

In Nitrosococcus oceani (strain ATCC 19707 / BCRC 17464 / JCM 30415 / NCIMB 11848 / C-107), this protein is Large ribosomal subunit protein bL32.